The sequence spans 630 residues: Beta-phellandrene synthase, chloroplastic (630 aa).

The N-terminal 48 residues, 1-48 (MALVSSAPKSCLHKSLIRSTHHELKPLRRTIPTLGMCRRGKSFTPSVS), are a transit peptide targeting the chloroplast. Positions 381, 385, and 533 each coordinate Mg(2+). Positions 381-385 (DDIYD) match the DDXXD motif motif.

The protein belongs to the terpene synthase family. Tpsd subfamily. Mg(2+) serves as cofactor. Requires Mn(2+) as cofactor. K(+) is required as a cofactor.

The protein resides in the plastid. It localises to the chloroplast. It catalyses the reaction (2E)-geranyl diphosphate = (-)-beta-phellandrene + diphosphate. Its pathway is terpene metabolism; oleoresin biosynthesis. Converts geranyl diphosphate to four products with (-)-(4S)-beta-phellandrene (52%) as the major olefin, and lesser amounts of (-)-(1S,5S)-beta-pinene (34%), (-)-1S,5S-alpha-pinene (8.5%), and (-)-(4S)-limonene (6%). Involved in defensive oleoresin formation in conifers in response to insect attack or other injury. Involved in monoterpene (C10) olefins biosynthesis. The protein is Beta-phellandrene synthase, chloroplastic (ag8) of Abies grandis (Grand fir).